The following is a 326-amino-acid chain: Malate dehydrogenase (326 aa).

NAD(+) is bound at residue 12–18; the sequence is GGTGQIA. Residues R93 and R99 each coordinate substrate. NAD(+) contacts are provided by residues N106, Q113, and 130-132; that span reads VGN. N132 and R163 together coordinate substrate. Catalysis depends on H188, which acts as the Proton acceptor.

This sequence belongs to the LDH/MDH superfamily. MDH type 2 family.

It catalyses the reaction (S)-malate + NAD(+) = oxaloacetate + NADH + H(+). In terms of biological role, catalyzes the reversible oxidation of malate to oxaloacetate. The polypeptide is Malate dehydrogenase (Chlamydia muridarum (strain MoPn / Nigg)).